The chain runs to 308 residues: Glutaminase (308 aa).

Residues S66, N117, E161, N168, Y192, Y244, and V262 each contribute to the substrate site.

The protein belongs to the glutaminase family. As to quaternary structure, homotetramer.

It catalyses the reaction L-glutamine + H2O = L-glutamate + NH4(+). The protein is Glutaminase of Photorhabdus laumondii subsp. laumondii (strain DSM 15139 / CIP 105565 / TT01) (Photorhabdus luminescens subsp. laumondii).